A 98-amino-acid chain; its full sequence is Homeobox protein Ht-En (98 aa).

The segment at residues 3-62 (EKRPRTAFTGDQLARLKREFSENKYLTEQRRTCLAKELNLNESQIKIWFQNKRAKMKKAS) is a DNA-binding region (homeobox). The segment at 79 to 98 (NHSSSSSSSSSSSSSIFLLA) is disordered. A compositionally biased stretch (low complexity) spans 81–98 (SSSSSSSSSSSSSIFLLA).

It belongs to the engrailed homeobox family. Phosphorylated in the Ser-rich domain.

It is found in the nucleus. Functionally, this protein specifies the body segmentation pattern. The protein is Homeobox protein Ht-En (HT-EN) of Helobdella triserialis (Leech).